The chain runs to 173 residues: CKLF-like MARVEL transmembrane domain-containing protein 8 (173 aa).

An MARVEL domain is found at 36-168 (FLRTLPGFLI…NTYFSFIAWR (133 aa)). 4 helical membrane-spanning segments follow: residues 40–60 (LPGF…TLIA), 70–90 (FGWV…FLII), 105–125 (TTVG…AAVV), and 147–167 (FFAF…FIAW).

It belongs to the chemokine-like factor family. As to expression, highly expressed in liver and pancreas.

It localises to the membrane. The protein localises to the cytoplasm. It is found in the nucleus. The protein is CKLF-like MARVEL transmembrane domain-containing protein 8 (CMTM8) of Homo sapiens (Human).